The chain runs to 381 residues: UDP-4-amino-4-deoxy-L-arabinose--oxoglutarate aminotransferase (381 aa).

K182 carries the N6-(pyridoxal phosphate)lysine modification.

This sequence belongs to the DegT/DnrJ/EryC1 family. ArnB subfamily. Homodimer. Pyridoxal 5'-phosphate is required as a cofactor.

It catalyses the reaction UDP-4-amino-4-deoxy-beta-L-arabinose + 2-oxoglutarate = UDP-beta-L-threo-pentopyranos-4-ulose + L-glutamate. Its pathway is nucleotide-sugar biosynthesis; UDP-4-deoxy-4-formamido-beta-L-arabinose biosynthesis; UDP-4-deoxy-4-formamido-beta-L-arabinose from UDP-alpha-D-glucuronate: step 2/3. It participates in bacterial outer membrane biogenesis; lipopolysaccharide biosynthesis. Functionally, catalyzes the conversion of UDP-4-keto-arabinose (UDP-Ara4O) to UDP-4-amino-4-deoxy-L-arabinose (UDP-L-Ara4N). The modified arabinose is attached to lipid A and is required for resistance to polymyxin and cationic antimicrobial peptides. In Edwardsiella ictaluri (strain 93-146), this protein is UDP-4-amino-4-deoxy-L-arabinose--oxoglutarate aminotransferase.